The chain runs to 250 residues: N-acyl homoserine lactonase (250 aa).

Positions 104, 106, 108, 109, 169, 191, and 235 each coordinate Zn(2+).

The protein belongs to the metallo-beta-lactamase superfamily. Monomer. Zn(2+) is required as a cofactor.

The enzyme catalyses an N-acyl-L-homoserine lactone + H2O = an N-acyl-L-homoserine + H(+). Completely inhibited by Cu(2+) and Ag(+). Partially inhibited by Cr(2+), Pb(2+) and Fe(2+). Mg(2+), Ca(2+), Mn(2+), Co(2+), Ni(2+), Zn(2+) and Cd(2+) have no effect on activity. The chelating agents EDTA, 2,2'bipyridine and o-phenanthroline have no effect on enzyme activity. Hydrolyzes acyl homoserine lactones with varying lengths of acyl chains, with a slight preference for substrates without 3-oxo substitution at the C3 position. Has only residual activity towards non-acyl lactones, and no activity towards non-cyclic esters. The polypeptide is N-acyl homoserine lactonase (Bacillus sp).